Here is a 197-residue protein sequence, read N- to C-terminus: Small ribosomal subunit protein uS7 (197 aa).

Belongs to the universal ribosomal protein uS7 family. Part of the 30S ribosomal subunit.

One of the primary rRNA binding proteins, it binds directly to 16S rRNA where it nucleates assembly of the head domain of the 30S subunit. Is located at the subunit interface close to the decoding center. In Methanopyrus kandleri (strain AV19 / DSM 6324 / JCM 9639 / NBRC 100938), this protein is Small ribosomal subunit protein uS7.